The sequence spans 729 residues: Fatty acid oxidation complex subunit alpha (729 aa).

The segment at 1–189 (MLYKGDTLYL…KIGLVDGVVK (189 aa)) is enoyl-CoA hydratase/isomerase. Residue Asp296 participates in substrate binding. The interval 311 to 729 (ETPKQAAVLG…ARPVGDLKTA (419 aa)) is 3-hydroxyacyl-CoA dehydrogenase. Residues Met324, Asp343, 400-402 (VVE), Lys407, and Ser429 each bind NAD(+). His450 serves as the catalytic For 3-hydroxyacyl-CoA dehydrogenase activity. Position 453 (Asn453) interacts with NAD(+). Residues Asn500 and Tyr660 each coordinate substrate. A disordered region spans residues 708–729 (RHNEPYYPPVEPARPVGDLKTA).

In the N-terminal section; belongs to the enoyl-CoA hydratase/isomerase family. This sequence in the C-terminal section; belongs to the 3-hydroxyacyl-CoA dehydrogenase family. As to quaternary structure, heterotetramer of two alpha chains (FadB) and two beta chains (FadA).

It catalyses the reaction a (3S)-3-hydroxyacyl-CoA + NAD(+) = a 3-oxoacyl-CoA + NADH + H(+). The enzyme catalyses a (3S)-3-hydroxyacyl-CoA = a (2E)-enoyl-CoA + H2O. The catalysed reaction is a 4-saturated-(3S)-3-hydroxyacyl-CoA = a (3E)-enoyl-CoA + H2O. It carries out the reaction (3S)-3-hydroxybutanoyl-CoA = (3R)-3-hydroxybutanoyl-CoA. It catalyses the reaction a (3Z)-enoyl-CoA = a 4-saturated (2E)-enoyl-CoA. The enzyme catalyses a (3E)-enoyl-CoA = a 4-saturated (2E)-enoyl-CoA. It participates in lipid metabolism; fatty acid beta-oxidation. Functionally, involved in the aerobic and anaerobic degradation of long-chain fatty acids via beta-oxidation cycle. Catalyzes the formation of 3-oxoacyl-CoA from enoyl-CoA via L-3-hydroxyacyl-CoA. It can also use D-3-hydroxyacyl-CoA and cis-3-enoyl-CoA as substrate. This Citrobacter koseri (strain ATCC BAA-895 / CDC 4225-83 / SGSC4696) protein is Fatty acid oxidation complex subunit alpha.